The sequence spans 872 residues: Cilia- and flagella-associated protein 58 (872 aa).

2 coiled-coil regions span residues 106–595 (VDSA…ADGE) and 642–839 (ESQY…QKNK).

The protein belongs to the CFAP58 family. In terms of assembly, interacts with ODFP2.

The protein resides in the cell projection. It is found in the cilium. It localises to the flagellum. The protein localises to the cytoplasm. Its subcellular location is the cytoskeleton. The protein resides in the microtubule organizing center. It is found in the centrosome. Functionally, has an essential role in the assembly and organization of the sperm flagellar axoneme. Required for the elongation of the primary cilium and sperm flagellar midpiece via modulation of the Notch signaling pathway. This chain is Cilia- and flagella-associated protein 58, found in Homo sapiens (Human).